A 1041-amino-acid chain; its full sequence is Importin-9 (1041 aa).

Residue Ala2 is modified to N-acetylalanine. An Importin N-terminal domain is found at 43-119 (AEEQIKVLEV…RELLPNGLRE (77 aa)). A disordered region spans residues 936-967 (QATPAEWNQDDSNDMWEDQEEEEEEEEDGLAG). The segment covering 943 to 964 (NQDDSNDMWEDQEEEEEEEEDG) has biased composition (acidic residues).

This sequence belongs to the importin beta family. In terms of assembly, interacts with histones H2A, H2B, H3 and H4. The binding is coupled to RanGTP cycles. Interacts with AKIRIN2; promoting association with pre-assembled proteasomes. Associates with pre-assembled proteasomes; interaction is indirect and mediated via interaction with AKIRIN2. Interacts with PPP2R1A and PPP2R1B.

The protein resides in the cytoplasm. It localises to the nucleus. Functionally, nuclear transport receptor that mediates nuclear import of proteins, such as histones, proteasome and actin. Serves as receptor for nuclear localization signals (NLS) in cargo substrates. Is thought to mediate docking of the importin/substrate complex to the nuclear pore complex (NPC) through binding to nucleoporin and the complex is subsequently translocated through the pore by an energy requiring, Ran-dependent mechanism. At the nucleoplasmic side of the NPC, Ran binds to the importin, the importin/substrate complex dissociates and importin is re-exported from the nucleus to the cytoplasm where GTP hydrolysis releases Ran. The directionality of nuclear import is thought to be conferred by an asymmetric distribution of the GTP- and GDP-bound forms of Ran between the cytoplasm and nucleus. Mediates the import of pre-assembled proteasomes into the nucleus; AKIRIN2 acts as a molecular bridge between IPO9 and the proteasome complex. Mediates the nuclear import of histones H2A, H2B, H4 and H4. In addition to nuclear import, also acts as a chaperone for histones by preventing inappropriate non-nucleosomal interactions. Mediates the nuclear import of actin. This is Importin-9 from Mus musculus (Mouse).